The sequence spans 465 residues: GTPase Der (465 aa).

EngA-type G domains are found at residues P3–S167 and I179–L352. GTP is bound by residues G9–S16, D57–M61, N119–D122, G185–S192, D232–L236, and N297–D300. Positions R353–D437 constitute a KH-like domain.

The protein belongs to the TRAFAC class TrmE-Era-EngA-EngB-Septin-like GTPase superfamily. EngA (Der) GTPase family. In terms of assembly, associates with the 50S ribosomal subunit.

Its function is as follows. GTPase that plays an essential role in the late steps of ribosome biogenesis. This chain is GTPase Der, found in Xylella fastidiosa (strain M23).